A 536-amino-acid chain; its full sequence is Uridine 5'-monophosphate transferase (536 aa).

The segment at 22–84 (ADHPTHTPED…GLQQCSSSPS (63 aa)) is disordered. Over residues 31–45 (DSPQTVPSPRSSSAH) the composition is skewed to polar residues. Over residues 48-60 (EIQELRSLQETRP) the composition is skewed to basic and acidic residues. Over residues 66-84 (RSQSRSSKHGLQQCSSSPS) the composition is skewed to polar residues. LRR repeat units follow at residues 140–164 (AGQA…LHRL), 165–189 (AHLR…SLCK), 191–211 (LERI…IGAL), 212–234 (KNLS…IGQC), 236–257 (SLTT…LANL), and 258–282 (TQLK…NLDD). Residues 377–533 (ITLDRIFKLN…LEGIATVMNQ (157 aa)) form the Fido domain.

It in the C-terminal section; belongs to the fic family. In terms of assembly, interacts with several members of the Arabidopsis RLCK VIIa subfamily.

The protein localises to the secreted. Its subcellular location is the host cell. It localises to the host cell membrane. It catalyses the reaction L-seryl-[protein] + UTP = O-(5'-uridylyl)-L-seryl-[protein] + diphosphate. It carries out the reaction L-threonyl-[protein] + UTP = uridylyl-L-threonyl-[protein] + diphosphate. In terms of biological role, functions both as a virulence and an avirulence gene in Arabidopsis. Causes disease on the Kashmir (Kas) ecotype, but not on Columbia (Col-0) ecotype. Acts by directly uridylylating the conserved phosphorylation sites in the activation loop of a number of host receptor-like cytoplasmic protein kinases (RLCK), including BIK1, RIPK, PBL1 and PBL2, preventing the activation of these kinases and subsequent signal transduction. In susceptible Arabidopsis plants, uridylylation of BIK1 inhibits the PAMP-triggered immunity (PTI) signaling cascade and thereby promotes bacterial virulence. It also inhibits RPM1-dependent effector-triggered immunity (ETI) in mesophyll tissues by targeting RIPK. In contrast, in the resistant ecotype Col-0, xopAC is a major avirulence gene. Uridylylation of PBL2 triggers the PBL2-RKS1 interaction and thus the assembly of the PBL2-RKS1-ZAR1 complex, which, in turn, activates effector-triggered immunity (ETI) against X.campestris. The protein is Uridine 5'-monophosphate transferase of Xanthomonas campestris pv. campestris (strain 8004).